The primary structure comprises 306 residues: Pre-mRNA-splicing factor cwf26 (306 aa).

Residues K130–S152 are disordered. Residues K130–V198 adopt a coiled-coil conformation.

The protein belongs to the CWC26 family. Belongs to the 40S cdc5-associated complex (or cwf complex), a spliceosome sub-complex reminiscent of a late-stage spliceosome composed of the U2, U5 and U6 snRNAs and at least brr2, cdc5, cwf2/prp3, cwf3/syf1, cwf4/syf3, cwf5/ecm2, spp42/cwf6, cwf7/spf27, cwf8, cwf9, cwf10, cwf11, cwf12, prp45/cwf13, cwf14, cwf15, cwf16, cwf17, cwf18, cwf19, cwf20, cwf21, cwf22, cwf23, cwf24, cwf25, cwf26, cyp7/cwf27, cwf28, cwf29/ist3, lea1, msl1, prp5/cwf1, prp10, prp12/sap130, prp17, prp22, sap61, sap62, sap114, sap145, slu7, smb1, smd1, smd3, smf1, smg1 and syf2.

The protein localises to the cytoplasm. The protein resides in the nucleus. In terms of biological role, involved in mRNA splicing. The sequence is that of Pre-mRNA-splicing factor cwf26 (cwf26) from Schizosaccharomyces pombe (strain 972 / ATCC 24843) (Fission yeast).